A 1420-amino-acid chain; its full sequence is DNA-directed RNA polymerase subunit beta' (1420 aa).

The Zn(2+) site is built by Cys-71, Cys-73, Cys-86, and Cys-89. Mg(2+) is bound by residues Asp-461, Asp-463, and Asp-465. Positions 815, 889, 896, and 899 each coordinate Zn(2+).

The protein belongs to the RNA polymerase beta' chain family. As to quaternary structure, the RNAP catalytic core consists of 2 alpha, 1 beta, 1 beta' and 1 omega subunit. When a sigma factor is associated with the core the holoenzyme is formed, which can initiate transcription. Requires Mg(2+) as cofactor. Zn(2+) is required as a cofactor.

The catalysed reaction is RNA(n) + a ribonucleoside 5'-triphosphate = RNA(n+1) + diphosphate. DNA-dependent RNA polymerase catalyzes the transcription of DNA into RNA using the four ribonucleoside triphosphates as substrates. The polypeptide is DNA-directed RNA polymerase subunit beta' (Histophilus somni (strain 2336) (Haemophilus somnus)).